The sequence spans 506 residues: Tyrosine-protein phosphatase non-receptor type substrate 1 (506 aa).

The N-terminal stretch at 1–29 is a signal peptide; sequence MEPARPAPGRLRPLLCLLLAASNAWTGTA. The Ig-like V-type domain occupies 30 to 145; that stretch reads GDGELQVIQP…SGPGTHLTVS (116 aa). The Extracellular segment spans residues 30–371; it reads GDGELQVIQP…PGPNDSNWTS (342 aa). A disulfide bridge connects residues C55 and C121. N92 is a glycosylation site (N-linked (GlcNAc...) asparagine). The disordered stretch occupies residues 136-159; sequence SGPGTHLTVSAKPSPPVLSGPTVR. 2 Ig-like C1-type domains span residues 148-248 and 255-348; these read PSPP…ANLS and PTLE…HTLE. 12 N-linked (GlcNAc...) asparagine glycosylation sites follow: N167, N179, N204, N210, N246, N270, N292, N311, N319, N344, N365, and N368. Cysteines 170 and 228 form a disulfide. The cysteines at positions 273 and 331 are disulfide-linked. A disordered region spans residues 344-364; sequence NHTLEVSAPQKDQDTGQTPGP. Residues 372–392 form a helical membrane-spanning segment; sequence IFIVVGVVCALLVALLIAALY. Residues 393–506 are Cytoplasmic-facing; that stretch reads LLRIRQNKAK…EYASVQVQRK (114 aa). A disordered region spans residues 402 to 468; the sequence is KGSTSSTRLH…QARPPPVSED (67 aa). A compositionally biased stretch (basic and acidic residues) spans 409–418; that stretch reads RLHEPEKNTR. Residues 419-429 are compositionally biased toward polar residues; it reads ETTQIQDNNDI. Y431 bears the Phosphotyrosine; by Tyr-kinases mark. The SH2-binding signature appears at 432–435; the sequence is ADLN. The short motif at 441 to 446 is the SH3-binding element; sequence KSTPKA. Polar residues predominate over residues 444-456; that stretch reads PKANEPNNHTEYA. 3 positions are modified to phosphotyrosine; by Tyr-kinases: Y455, Y472, and Y498. 3 consecutive short sequence motifs (SH2-binding) follow at residues 455-458, 472-475, and 498-501; these read YASI, YADL, and YASV. The interval 480 to 506 is disordered; it reads LNRTPKQPAPKPEPSYSEYASVQVQRK. The segment covering 497-506 has biased composition (polar residues); the sequence is EYASVQVQRK.

In terms of assembly, binds PTPN11 when tyrosine-phosphorylated, except in macrophages, where it primarily binds PTPN6. Binds GRB2 in vitro. Binds JAK2 irrespective of its phosphorylation status and forms a stable complex. Binds SCAP1 and/or SCAP2. The resulting complex recruits FYB1. Binds FGR and PTK2B. Interacts with TRIM2. Phosphorylated on tyrosine residues. As to expression, highly expressed in spleen macrophages. Detected in skin dendritic cells.

The protein localises to the membrane. In terms of biological role, immunoglobulin-like cell surface receptor for CD47. Acts as docking protein and induces translocation of PTPN6, PTPN11 and other binding partners from the cytosol to the plasma membrane. Supports adhesion of cerebellar neurons, neurite outgrowth and glial cell attachment. May play a key role in intracellular signaling during synaptogenesis and in synaptic function. Involved in the negative regulation of receptor tyrosine kinase-coupled cellular responses induced by cell adhesion, growth factors or insulin. Mediates negative regulation of phagocytosis, mast cell activation and dendritic cell activation. CD47 binding prevents maturation of immature dendritic cells and inhibits cytokine production by mature dendritic cells. Plays a role in antiviral immunity and limits new world arenavirus infection by decreasing virus internalization. Receptor for THBS1. Interaction with THBS1 stimulates phosphorylation of SIRPA. In response to THBS1, involved in ROS signaling in non-phagocytic cells, stimulating NADPH oxidase-derived ROS production. This chain is Tyrosine-protein phosphatase non-receptor type substrate 1 (SIRPA), found in Bos taurus (Bovine).